The chain runs to 125 residues: Large ribosomal subunit protein bL12 (125 aa).

This sequence belongs to the bacterial ribosomal protein bL12 family. Homodimer. Part of the ribosomal stalk of the 50S ribosomal subunit. Forms a multimeric L10(L12)X complex, where L10 forms an elongated spine to which 2 to 4 L12 dimers bind in a sequential fashion. Binds GTP-bound translation factors.

In terms of biological role, forms part of the ribosomal stalk which helps the ribosome interact with GTP-bound translation factors. Is thus essential for accurate translation. In Anaeromyxobacter dehalogenans (strain 2CP-1 / ATCC BAA-258), this protein is Large ribosomal subunit protein bL12.